A 73-amino-acid polypeptide reads, in one-letter code: Putative membrane protein insertion efficiency factor (73 aa).

The protein belongs to the UPF0161 family.

Its subcellular location is the cell inner membrane. Functionally, could be involved in insertion of integral membrane proteins into the membrane. This is Putative membrane protein insertion efficiency factor from Phocaeicola vulgatus (strain ATCC 8482 / DSM 1447 / JCM 5826 / CCUG 4940 / NBRC 14291 / NCTC 11154) (Bacteroides vulgatus).